The chain runs to 97 residues: Peptide Y (97 aa).

The first 28 residues, 1 to 28 (MANMLRSWMMLAALAVCLLVCLSSFADA), serve as a signal peptide directing secretion. Position 64 is a tyrosine amide (Tyr64). Residues 68–97 (STPEQAVAWLLFGADSSQDAEPRLDYSDQW) constitute a propeptide, C-terminal extension.

The protein belongs to the NPY family.

It is found in the secreted. This chain is Peptide Y, found in Dicentrarchus labrax (European seabass).